The sequence spans 228 residues: Calcyclin-binding protein (228 aa).

The residue at position 1 (M1) is an N-acetylmethionine. Residue A2 is modified to N-acetylalanine. The interaction with SIAH1 stretch occupies residues 2 to 80; the sequence is ASEELQKDLE…YTVKISNYGW (79 aa). Phosphoserine is present on S3. K8 and K19 each carry N6-acetyllysine. At S34 the chain carries Phosphoserine. In terms of domain architecture, CS spans 73–167; sequence VKISNYGWDQ…VENTRWDYLT (95 aa). The tract at residues 73 to 228 is interaction with SKP1; sequence VKISNYGWDQ…EKQAKGDTEF (156 aa). N6-acetyllysine is present on residues K85 and K118. The interval 154 to 228 is interaction with S100A6; it reads CRKKVENTRW…EKQAKGDTEF (75 aa). Positions 168–228 constitute an SGS domain; sequence QVEKECKEKE…EKQAKGDTEF (61 aa).

Homodimer. Interacts with proteins of the S100 family S100A1, S100A6, S100B, S100P and S100A12 in a calcium-dependent manner. Component of some large E3 complex at least composed of UBE2D1, SIAH1, CACYBP/SIP, SKP1, APC and TBL1X. Interacts directly with SIAH1, SIAH2 and SKP1. Phosphorylated on serine residues. Phosphorylated upon induction by RA or at high calcium concentrations.

The protein resides in the nucleus. It localises to the cytoplasm. Functionally, may be involved in calcium-dependent ubiquitination and subsequent proteasomal degradation of target proteins. Probably serves as a molecular bridge in ubiquitin E3 complexes. Participates in the ubiquitin-mediated degradation of beta-catenin (CTNNB1). The chain is Calcyclin-binding protein (CACYBP) from Homo sapiens (Human).